Consider the following 201-residue polypeptide: Potassium-transporting ATPase KdpC subunit (201 aa).

The chain crosses the membrane as a helical span at residues Pro7–Met27.

The protein belongs to the KdpC family. In terms of assembly, the system is composed of three essential subunits: KdpA, KdpB and KdpC.

It localises to the cell inner membrane. Its function is as follows. Part of the high-affinity ATP-driven potassium transport (or Kdp) system, which catalyzes the hydrolysis of ATP coupled with the electrogenic transport of potassium into the cytoplasm. This subunit acts as a catalytic chaperone that increases the ATP-binding affinity of the ATP-hydrolyzing subunit KdpB by the formation of a transient KdpB/KdpC/ATP ternary complex. This is Potassium-transporting ATPase KdpC subunit from Xanthobacter autotrophicus (strain ATCC BAA-1158 / Py2).